A 202-amino-acid chain; its full sequence is MSGNREFYFRRLHSLLGVIPVGIFLIQHLVVNQFAARGAEAFNSAAHFMDSLPFRYALEIFIIFLPLIYHAVYGVYIAFTAKNNAGQYSYMRNWLFVLQRVTGIITLIFVSWHVWETRIAAQMGAEVNFDMMANILSSPAMLGFYIVGVLSTIFHFSNGLWSFAVTWGITVTPRSQRISTYVTLIIFVALSYVGLKAIFAFV.

The next 5 helical transmembrane spans lie at 12-31, 60-79, 93-113, 135-155, and 178-196; these read LHSLLGVIPVGIFLIQHLVV, IFIIFLPLIYHAVYGVYIAF, NWLFVLQRVTGIITLIFVSWH, ILSSPAMLGFYIVGVLSTIFH, and ISTYVTLIIFVALSYVGLK. His28, His70, His113, and His155 together coordinate heme.

The protein belongs to the cytochrome b558 family. In terms of assembly, part of an enzyme complex containing three subunits: a flavoprotein, an iron-sulfur protein and cytochrome b-558.

Its subcellular location is the cell membrane. It participates in carbohydrate metabolism; tricarboxylic acid cycle. Its function is as follows. Di-heme cytochrome of the succinate dehydrogenase complex. This is Succinate dehydrogenase cytochrome b558 subunit (sdhC) from Bacillus subtilis (strain 168).